We begin with the raw amino-acid sequence, 418 residues long: tRNA wybutosine-synthesizing protein 2 (418 aa).

Residues serine 228, lysine 235, 275–276 (EI), and 302–303 (EN) each bind S-adenosyl-L-methionine.

This sequence belongs to the class I-like SAM-binding methyltransferase superfamily. TRM5/TYW2 family.

The protein localises to the cytoplasm. It is found in the nucleus. It catalyses the reaction 4-demethylwyosine(37) in tRNA(Phe) + S-adenosyl-L-methionine = 4-demethyl-7-[(3S)-3-amino-3-carboxypropyl]wyosine(37) in tRNA(Phe) + S-methyl-5'-thioadenosine + H(+). The protein operates within tRNA modification; wybutosine-tRNA(Phe) biosynthesis. S-adenosyl-L-methionine-dependent transferase that acts as a component of the wybutosine biosynthesis pathway. Wybutosine is a hyper modified guanosine with a tricyclic base found at the 3'-position adjacent to the anticodon of eukaryotic phenylalanine tRNA. Catalyzes the transfer of the alpha-amino-alpha-carboxypropyl (acp) group from S-adenosyl-L-methionine to the C-7 position of 4-demethylwyosine (imG-14) to produce wybutosine-86. The protein is tRNA wybutosine-synthesizing protein 2 (trm12) of Schizosaccharomyces pombe (strain 972 / ATCC 24843) (Fission yeast).